The chain runs to 157 residues: Protein Smg homolog (157 aa).

Belongs to the Smg family.

The polypeptide is Protein Smg homolog (Aliivibrio salmonicida (strain LFI1238) (Vibrio salmonicida (strain LFI1238))).